A 173-amino-acid polypeptide reads, in one-letter code: Ribosome maturation factor RimM (173 aa).

One can recognise a PRC barrel domain in the interval 97-171; sequence EGEFFYHEII…QITIEPMEGL (75 aa).

Belongs to the RimM family. Binds ribosomal protein uS19.

It is found in the cytoplasm. Functionally, an accessory protein needed during the final step in the assembly of 30S ribosomal subunit, possibly for assembly of the head region. Essential for efficient processing of 16S rRNA. May be needed both before and after RbfA during the maturation of 16S rRNA. It has affinity for free ribosomal 30S subunits but not for 70S ribosomes. This Halalkalibacterium halodurans (strain ATCC BAA-125 / DSM 18197 / FERM 7344 / JCM 9153 / C-125) (Bacillus halodurans) protein is Ribosome maturation factor RimM.